The primary structure comprises 328 residues: Probable cell division protein WhiA (328 aa).

The H-T-H motif DNA-binding region spans 273–306; the sequence is SLEELGALADPPLTKDAVAGRIRRLLAMADKRAS.

This sequence belongs to the WhiA family. As to quaternary structure, monomer in solution.

Involved in cell division and chromosome segregation. Involved in sporulation. May coordinate the cessation of aerial hyphae growth and subsequent chromosome segregation and/or septation. Required for expression of the ParB partioning protein during sporogenesis. Activates its own transcription and represses WhiB. Binds with low affinity to its own promoter and to the Parp2 sporulation-specific promoter. Also binds directly to the RNA polymerase sigma factor WhiG, leading to inhibition of WhiG-dependent transcription in a dose-dependent manner. This Streptomyces coelicolor (strain ATCC BAA-471 / A3(2) / M145) protein is Probable cell division protein WhiA.